The primary structure comprises 262 residues: Type III pantothenate kinase (262 aa).

6–13 (DVGNTNAV) is an ATP binding site. Substrate is bound by residues Y100 and 107 to 110 (GADR). The active-site Proton acceptor is D109. A K(+)-binding site is contributed by D129. T132 provides a ligand contact to ATP. T184 lines the substrate pocket.

This sequence belongs to the type III pantothenate kinase family. Homodimer. The cofactor is NH4(+). Requires K(+) as cofactor.

It localises to the cytoplasm. The enzyme catalyses (R)-pantothenate + ATP = (R)-4'-phosphopantothenate + ADP + H(+). The protein operates within cofactor biosynthesis; coenzyme A biosynthesis; CoA from (R)-pantothenate: step 1/5. Catalyzes the phosphorylation of pantothenate (Pan), the first step in CoA biosynthesis. The sequence is that of Type III pantothenate kinase from Bacillus cytotoxicus (strain DSM 22905 / CIP 110041 / 391-98 / NVH 391-98).